The chain runs to 151 residues: Probable chemoreceptor glutamine deamidase CheD (151 aa).

It belongs to the CheD family.

The enzyme catalyses L-glutaminyl-[protein] + H2O = L-glutamyl-[protein] + NH4(+). In terms of biological role, probably deamidates glutamine residues to glutamate on methyl-accepting chemotaxis receptors (MCPs), playing an important role in chemotaxis. This Methanosarcina barkeri (strain Fusaro / DSM 804) protein is Probable chemoreceptor glutamine deamidase CheD.